A 539-amino-acid chain; its full sequence is Chaperonin GroEL (539 aa).

ATP-binding positions include 30-33, 87-91, glycine 414, 479-481, and aspartate 495; these read TLGP, DGTTT, and DAL.

The protein belongs to the chaperonin (HSP60) family. As to quaternary structure, forms a cylinder of 14 subunits composed of two heptameric rings stacked back-to-back. Interacts with the co-chaperonin GroES.

Its subcellular location is the cytoplasm. The catalysed reaction is ATP + H2O + a folded polypeptide = ADP + phosphate + an unfolded polypeptide.. Its function is as follows. Together with its co-chaperonin GroES, plays an essential role in assisting protein folding. The GroEL-GroES system forms a nano-cage that allows encapsulation of the non-native substrate proteins and provides a physical environment optimized to promote and accelerate protein folding. This chain is Chaperonin GroEL, found in Caldicellulosiruptor bescii (strain ATCC BAA-1888 / DSM 6725 / KCTC 15123 / Z-1320) (Anaerocellum thermophilum).